Consider the following 915-residue polypeptide: MAETLSGLGDSGAAGAAALSSASSETGTRRLSDLRVIDLRAELRKRNVDSSGNKSVLMERLKKAIEDEGGNPDEIEITSEGNKKTSKRSSKGRKPEEEGVEDNGLEENSGDGQEDVETSLENLQDIDIMDISVLDEAEIDNGSVADCVEDDDADNLQESLSDSRELVEGEMKELPEQLQEHAIEDKETINNLDTSSSDFTILQEIEEPSLEPENEKILDILGETCKSEPVKEESSELEQPFAQDTSSVGPDRKLAEEEDLFDSAHPEEGDLDLASESTAHAQSSKADSLLAVVKREPAEQPGDGERTDCEPVGLEPAVEQSSAASELAEASSEELAEAPTEAPSPEARDSKEDGRKFDFDACNEVPPAPKESSTSEGADQKMSSPEDDSDTKRLSKEEKGRSSCGRNFWVSGLSSTTRATDLKNLFSKYGKVVGAKVVTNARSPGARCYGFVTMSTAEEATKCINHLHKTELHGKMISVEKAKNEPVGKKTSDKRDSDGKKEKSSNSDRSTNLKRDDKCDRKDDAKKGDDGSGEKSKDQDDQKPGPSERSRATKSGSRGTERTVVMDKSKGVPVISVKTSGSKERASKSQDRKSASREKRSVVSFDKVKEPRKSRDSESHSRVRERSEREQRMQAQWEREERERLEIARERLAFQRQRLERERMERERLERERMHVEHERRREQERIHREREELRRQQELRYEQERRPAVRRPYDLDRRDDAYWPEAKRAALDERYHSDFNRQDRFHDFDHRDRGRYPDHSVDRREGSRSMMGEREGQHYPERHGGPERHGRDSRDGWGGYGSDKRMSEGRGLPPPPRRDWGDHGRREDDRSWQGTADGGMMDRDHKRWQGGERSMSGHSGPGHMMNRGGMSGRGSFAPGGASRGHPIPHGGMQGGFGGQSRGSRPSDARFTRRY.

The span at 1–24 (MAETLSGLGDSGAAGAAALSSASS) shows a compositional bias: low complexity. Positions 1 to 33 (MAETLSGLGDSGAAGAAALSSASSETGTRRLSD) are disordered. Ala2 is subject to N-acetylalanine. A phosphoserine mark is found at Ser24 and Ser55. The SAP domain occupies 31–65 (LSDLRVIDLRAELRKRNVDSSGNKSVLMERLKKAI). The interval 64–118 (AIEDEGGNPDEIEITSEGNKKTSKRSSKGRKPEEEGVEDNGLEENSGDGQEDVET) is disordered. The span at 67–77 (DEGGNPDEIEI) shows a compositional bias: acidic residues. Ser79 carries the post-translational modification Phosphoserine. Residues 98–118 (EGVEDNGLEENSGDGQEDVET) are compositionally biased toward acidic residues. Glycyl lysine isopeptide (Lys-Gly) (interchain with G-Cter in SUMO2) cross-links involve residues Lys172 and Lys186. Thr188 bears the Phosphothreonine mark. Ser195, Ser197, and Ser209 each carry phosphoserine. The tract at residues 221–407 (LGETCKSEPV…EKGRSSCGRN (187 aa)) is disordered. Over residues 225-234 (CKSEPVKEES) the composition is skewed to basic and acidic residues. Residue Lys231 forms a Glycyl lysine isopeptide (Lys-Gly) (interchain with G-Cter in SUMO) linkage. Positions 275 to 286 (SESTAHAQSSKA) are enriched in polar residues. The segment covering 293-309 (VKREPAEQPGDGERTDC) has biased composition (basic and acidic residues). Lys294 participates in a covalent cross-link: Glycyl lysine isopeptide (Lys-Gly) (interchain with G-Cter in SUMO). The span at 319-330 (EQSSAASELAEA) shows a compositional bias: low complexity. Residues 346–359 (EARDSKEDGRKFDF) are compositionally biased toward basic and acidic residues. Residues 371-383 (ESSTSEGADQKMS) are compositionally biased toward polar residues. Lys381 participates in a covalent cross-link: Glycyl lysine isopeptide (Lys-Gly) (interchain with G-Cter in SUMO2). Phosphoserine is present on residues Ser383 and Ser384. Basic and acidic residues predominate over residues 390-401 (DTKRLSKEEKGR). A Glycyl lysine isopeptide (Lys-Gly) (interchain with G-Cter in SUMO2) cross-link involves residue Lys392. Positions 406–484 (RNFWVSGLSS…KMISVEKAKN (79 aa)) constitute an RRM domain. Ser415 is modified (phosphoserine). Composition is skewed to basic and acidic residues over residues 477 to 551 (ISVE…ERSR) and 559 to 570 (GTERTVVMDKSK). 3 disordered regions span residues 477-641 (ISVE…EREE), 671-708 (RERM…ERRP), and 749-915 (FDHR…TRRY). Glycyl lysine isopeptide (Lys-Gly) (interchain with G-Cter in SUMO2) cross-links involve residues Lys483, Lys514, Lys543, and Lys570. The segment at 528–792 (GDDGSGEKSK…RHGGPERHGR (265 aa)) is interaction with POLR2A. Interaction with SFRS1; SFRS9 and SFRS10. Lys578 participates in a covalent cross-link: Glycyl lysine isopeptide (Lys-Gly) (interchain with G-Cter in SUMO1); alternate. A Glycyl lysine isopeptide (Lys-Gly) (interchain with G-Cter in SUMO2); alternate cross-link involves residue Lys578. Residues Ser580, Ser582, Ser601, and Ser604 each carry the phosphoserine modification. Positions 581 to 641 (GSKERASKSQ…RMQAQWEREE (61 aa)) are enriched in basic and acidic residues. The Nuclear localization signal signature appears at 599-616 (KRSVVSFDKVKEPRKSRD). Positions 599-915 (KRSVVSFDKV…PSDARFTRRY (317 aa)) are interaction with SAFB2. Lys607 carries the post-translational modification N6-acetyllysine. Basic and acidic residues predominate over residues 749–796 (FDHRDRGRYPDHSVDRREGSRSMMGEREGQHYPERHGGPERHGRDSRD). Arg811 is subject to Omega-N-methylarginine. Composition is skewed to basic and acidic residues over residues 817-832 (PRRD…DDRS) and 841-851 (MMDRDHKRWQG). A Glycyl lysine isopeptide (Lys-Gly) (interchain with G-Cter in SUMO2) cross-link involves residue Lys847. Residues Arg868, Arg874, and Arg884 each carry the asymmetric dimethylarginine modification. The span at 892–901 (GMQGGFGGQS) shows a compositional bias: gly residues. Residues 905-915 (RPSDARFTRRY) show a composition bias toward basic and acidic residues.

As to quaternary structure, monomer and homodimer. Forms heterodimers with SAFB2. Interacts with KHDRBS3. Interacts with CLK2. Interacts with POLR2A, SRSF1/ASF, SRSF9/SRp30c and SFSF10/TRA2B. Interacts with isoform 1 and isoform 2 of SRPK1 and inhibits its activity. Interacts with RBMX. Interacts with FUS. Interacts with ZBED4. Post-translationally, sumoylated by PIAS1 with SUMO1 and SUMO2/3, desumoylated by SENP1. Sumoylation is required for transcriptional repressor activity. As to expression, ubiquitous. Expressed at high levels in the CNS and at low levels in the liver. Expressed in a wide number of breast cancer cell lines.

The protein localises to the nucleus. Binds to scaffold/matrix attachment region (S/MAR) DNA and forms a molecular assembly point to allow the formation of a 'transcriptosomal' complex (consisting of SR proteins and RNA polymerase II) coupling transcription and RNA processing. Functions as an estrogen receptor corepressor and can also bind to the HSP27 promoter and decrease its transcription. Thereby acts as a negative regulator of cell proliferation. When associated with RBMX, binds to and stimulates transcription from the SREBF1 promoter. This chain is Scaffold attachment factor B1 (SAFB), found in Homo sapiens (Human).